A 332-amino-acid polypeptide reads, in one-letter code: Phospholipase A2 inhibitor beta (332 aa).

A signal peptide spans 1 to 23 (MKSSVPSLLFVSLVMSLNSYTQQ). A glycan (N-linked (GlcNAc...) asparagine) is linked at Asn-35. LRR repeat units lie at residues 78–101 (LPNLQELHLSNNRLKTLPSGLFRN), 103–125 (PELHTLDLSTNLLEDLPPEIFTS), 127–149 (TSLTLLSISENRLAKLRLSWFET), 150–173 (LKELRILSLDNNQLKEVPISCFDK), 175–197 (EKLTFLDLSSNHLHRLSPDMFSG), 198–221 (LDNLERLSLENNPIRCIAPKSFHG), 223–245 (PKLSIISLKNCSLTNIITGVFQP), and 247–269 (NHXVLLDLSDNELTMLDPPVAIP). N-linked (GlcNAc...) asparagine glycosylation is present at Asn-232. A glycan (N-linked (GlcNAc...) asparagine) is linked at Asn-272. One can recognise an LRRCT domain in the interval 280–331 (NPWACNCRMDNLLTWVKEHKIDLYSKQEIVCAFPKSFKGEEATSLHRSQICP).

It belongs to the beta-type phospholipase A2 inhibitor family. As to quaternary structure, homotrimer.

Its subcellular location is the secreted. Inhibits the enzymatic activity of the basic phospholipase A2 (PLA2). This is Phospholipase A2 inhibitor beta from Elaphe climacophora (Japanese rat snake).